The chain runs to 426 residues: Glutamate-1-semialdehyde 2,1-aminomutase (426 aa).

N6-(pyridoxal phosphate)lysine is present on Lys265.

It belongs to the class-III pyridoxal-phosphate-dependent aminotransferase family. HemL subfamily. Homodimer. It depends on pyridoxal 5'-phosphate as a cofactor.

It localises to the cytoplasm. It catalyses the reaction (S)-4-amino-5-oxopentanoate = 5-aminolevulinate. It participates in porphyrin-containing compound metabolism; protoporphyrin-IX biosynthesis; 5-aminolevulinate from L-glutamyl-tRNA(Glu): step 2/2. The protein is Glutamate-1-semialdehyde 2,1-aminomutase of Escherichia coli (strain SMS-3-5 / SECEC).